Reading from the N-terminus, the 491-residue chain is N-succinylglutamate 5-semialdehyde dehydrogenase (491 aa).

Position 223 to 228 (223 to 228 (GSANTG)) interacts with NAD(+). Residues E246 and C280 contribute to the active site.

Belongs to the aldehyde dehydrogenase family. AstD subfamily.

The enzyme catalyses N-succinyl-L-glutamate 5-semialdehyde + NAD(+) + H2O = N-succinyl-L-glutamate + NADH + 2 H(+). It functions in the pathway amino-acid degradation; L-arginine degradation via AST pathway; L-glutamate and succinate from L-arginine: step 4/5. Catalyzes the NAD-dependent reduction of succinylglutamate semialdehyde into succinylglutamate. The sequence is that of N-succinylglutamate 5-semialdehyde dehydrogenase from Photorhabdus laumondii subsp. laumondii (strain DSM 15139 / CIP 105565 / TT01) (Photorhabdus luminescens subsp. laumondii).